The following is a 166-amino-acid chain: Peptidyl-prolyl cis-trans isomerase cyp18 (166 aa).

A PPIase cyclophilin-type domain is found at 2-164 (STVELNTSAG…QPVVIESAKI (163 aa)).

Belongs to the cyclophilin-type PPIase family. As to quaternary structure, monomer.

It is found in the cytoplasm. The enzyme catalyses [protein]-peptidylproline (omega=180) = [protein]-peptidylproline (omega=0). Its activity is regulated as follows. Inhibition by cyclosporin A with a Ki of 21 mu-mol. Its function is as follows. PPIases accelerate the folding of proteins. It catalyzes the cis-trans isomerization of proline imidic peptide bonds in oligopeptides. This is Peptidyl-prolyl cis-trans isomerase cyp18 from Streptomyces antibioticus.